A 344-amino-acid chain; its full sequence is Glyceraldehyde-3-phosphate dehydrogenase (344 aa).

NAD(+)-binding positions include 11–12 and G110; that span reads TI. D-glyceraldehyde 3-phosphate is bound at residue 139–141; that stretch reads SCN. C140 acts as the Nucleophile in catalysis. R169 contacts NAD(+). 195–196 contacts D-glyceraldehyde 3-phosphate; the sequence is HG. Position 302 (Q302) interacts with NAD(+).

The protein belongs to the glyceraldehyde-3-phosphate dehydrogenase family. In terms of assembly, homotetramer.

Its subcellular location is the cytoplasm. It carries out the reaction D-glyceraldehyde 3-phosphate + phosphate + NADP(+) = (2R)-3-phospho-glyceroyl phosphate + NADPH + H(+). It catalyses the reaction D-glyceraldehyde 3-phosphate + phosphate + NAD(+) = (2R)-3-phospho-glyceroyl phosphate + NADH + H(+). It functions in the pathway carbohydrate degradation; glycolysis; pyruvate from D-glyceraldehyde 3-phosphate: step 1/5. This Pyrobaculum calidifontis (strain DSM 21063 / JCM 11548 / VA1) protein is Glyceraldehyde-3-phosphate dehydrogenase.